We begin with the raw amino-acid sequence, 713 residues long: Polyribonucleotide nucleotidyltransferase (713 aa).

Mg(2+)-binding residues include aspartate 495 and aspartate 501. A KH domain is found at 562-621 (PRLLTLKIPVDMIGLVIGPGGKTIKRIVEETGAKVDIEDDGTVVVSSIDGAKALAAKQII). One can recognise an S1 motif domain in the interval 631-700 (DKVYLGTVTR…QKGRINLTRR (70 aa)).

It belongs to the polyribonucleotide nucleotidyltransferase family. The cofactor is Mg(2+).

The protein resides in the cytoplasm. It carries out the reaction RNA(n+1) + phosphate = RNA(n) + a ribonucleoside 5'-diphosphate. Involved in mRNA degradation. Catalyzes the phosphorolysis of single-stranded polyribonucleotides processively in the 3'- to 5'-direction. The protein is Polyribonucleotide nucleotidyltransferase of Gloeobacter violaceus (strain ATCC 29082 / PCC 7421).